We begin with the raw amino-acid sequence, 69 residues long: Mu-conotoxin-like Am3.3 (69 aa).

The first 20 residues, 1-20 (MMSKLGVLLTICLLLFPLTA), serve as a signal peptide directing secretion. A propeptide spanning residues 21-52 (VPLDGDQPADRPAERMQDDISSENHPMFDAIR) is cleaved from the precursor. A Cysteine amide modification is found at C68.

This sequence belongs to the conotoxin M family. Is not hydroxylated. In terms of processing, contains 3 disulfide bonds. Expressed by the venom duct.

The protein resides in the secreted. In terms of biological role, mu-conotoxins block voltage-gated sodium channels (Nav). The chain is Mu-conotoxin-like Am3.3 from Conus amadis (Amadis cone).